Reading from the N-terminus, the 1589-residue chain is Pentafunctional AROM polypeptide (1589 aa).

Residues 1–384 form a 3-dehydroquinate synthase region; sequence MAAPTTIKIL…HEQQASVVSN (384 aa). NAD(+) is bound by residues 44–46, 81–84, 114–116, and Asp119; these read DTT, ELSK, and GGV. Arg130 contributes to the 7-phospho-2-dehydro-3-deoxy-D-arabino-heptonate binding site. 139–140 is a binding site for NAD(+); that stretch reads TT. 7-phospho-2-dehydro-3-deoxy-D-arabino-heptonate contacts are provided by Asp146 and Lys152. Position 161 (Lys161) interacts with NAD(+). Asn162 provides a ligand contact to 7-phospho-2-dehydro-3-deoxy-D-arabino-heptonate. NAD(+) contacts are provided by residues 179–182 and Asn190; that span reads FLNT. Glu194 contacts Zn(2+). Residues 194-197 and Lys250 each bind 7-phospho-2-dehydro-3-deoxy-D-arabino-heptonate; that span reads EVIK. Glu260 serves as the catalytic Proton acceptor; for 3-dehydroquinate synthase activity. 7-phospho-2-dehydro-3-deoxy-D-arabino-heptonate is bound by residues 264–268 and His271; that span reads RNLLN. A Zn(2+)-binding site is contributed by His271. The active-site Proton acceptor; for 3-dehydroquinate synthase activity is the His275. 2 residues coordinate 7-phospho-2-dehydro-3-deoxy-D-arabino-heptonate: His287 and Lys356. His287 serves as a coordination point for Zn(2+). The segment at 397-841 is EPSP synthase; it reads VSPGVPKSLQ…WDTLAQLFKA (445 aa). Catalysis depends on Cys823, which acts as the For EPSP synthase activity. The shikimate kinase stretch occupies residues 861-1052; sequence ASIFIIGMRG…KKKPQSFFVS (192 aa). 867–874 is an ATP binding site; that stretch reads GMRGAGKT. The 3-dehydroquinase stretch occupies residues 1053–1273; it reads LTLPDLRPSA…AAPGQLSAQD (221 aa). The active-site Proton acceptor; for 3-dehydroquinate dehydratase activity is the His1176. Lys1204 (schiff-base intermediate with substrate; for 3-dehydroquinate dehydratase activity) is an active-site residue. The tract at residues 1286-1589 is shikimate dehydrogenase; the sequence is PRKFAIFGKP…VMNPGTDNRG (304 aa).

In the N-terminal section; belongs to the sugar phosphate cyclases superfamily. Dehydroquinate synthase family. It in the 2nd section; belongs to the EPSP synthase family. The protein in the 3rd section; belongs to the shikimate kinase family. This sequence in the 4th section; belongs to the type-I 3-dehydroquinase family. In the C-terminal section; belongs to the shikimate dehydrogenase family. As to quaternary structure, homodimer. Zn(2+) is required as a cofactor.

The protein localises to the cytoplasm. It catalyses the reaction 7-phospho-2-dehydro-3-deoxy-D-arabino-heptonate = 3-dehydroquinate + phosphate. The enzyme catalyses 3-dehydroquinate = 3-dehydroshikimate + H2O. It carries out the reaction shikimate + NADP(+) = 3-dehydroshikimate + NADPH + H(+). The catalysed reaction is shikimate + ATP = 3-phosphoshikimate + ADP + H(+). It catalyses the reaction 3-phosphoshikimate + phosphoenolpyruvate = 5-O-(1-carboxyvinyl)-3-phosphoshikimate + phosphate. Its pathway is metabolic intermediate biosynthesis; chorismate biosynthesis; chorismate from D-erythrose 4-phosphate and phosphoenolpyruvate: step 2/7. It functions in the pathway metabolic intermediate biosynthesis; chorismate biosynthesis; chorismate from D-erythrose 4-phosphate and phosphoenolpyruvate: step 3/7. It participates in metabolic intermediate biosynthesis; chorismate biosynthesis; chorismate from D-erythrose 4-phosphate and phosphoenolpyruvate: step 4/7. The protein operates within metabolic intermediate biosynthesis; chorismate biosynthesis; chorismate from D-erythrose 4-phosphate and phosphoenolpyruvate: step 5/7. Its pathway is metabolic intermediate biosynthesis; chorismate biosynthesis; chorismate from D-erythrose 4-phosphate and phosphoenolpyruvate: step 6/7. In terms of biological role, the AROM polypeptide catalyzes 5 consecutive enzymatic reactions in prechorismate polyaromatic amino acid biosynthesis. This chain is Pentafunctional AROM polypeptide, found in Coccidioides posadasii (strain C735) (Valley fever fungus).